Reading from the N-terminus, the 270-residue chain is Formamidopyrimidine-DNA glycosylase (270 aa).

The Schiff-base intermediate with DNA role is filled by Pro-2. The Proton donor role is filled by Glu-3. The active-site Proton donor; for beta-elimination activity is the Lys-56. 3 residues coordinate DNA: His-89, Arg-107, and Arg-151. The segment at 236–270 adopts an FPG-type zinc-finger fold; it reads TVYGRAGEPCRVCATPIRLLRQGQRSTYYCPNCQK. The active-site Proton donor; for delta-elimination activity is Arg-260.

It belongs to the FPG family. Monomer. Requires Zn(2+) as cofactor.

The enzyme catalyses Hydrolysis of DNA containing ring-opened 7-methylguanine residues, releasing 2,6-diamino-4-hydroxy-5-(N-methyl)formamidopyrimidine.. The catalysed reaction is 2'-deoxyribonucleotide-(2'-deoxyribose 5'-phosphate)-2'-deoxyribonucleotide-DNA = a 3'-end 2'-deoxyribonucleotide-(2,3-dehydro-2,3-deoxyribose 5'-phosphate)-DNA + a 5'-end 5'-phospho-2'-deoxyribonucleoside-DNA + H(+). Involved in base excision repair of DNA damaged by oxidation or by mutagenic agents. Acts as a DNA glycosylase that recognizes and removes damaged bases. Has a preference for oxidized purines, such as 7,8-dihydro-8-oxoguanine (8-oxoG). Has AP (apurinic/apyrimidinic) lyase activity and introduces nicks in the DNA strand. Cleaves the DNA backbone by beta-delta elimination to generate a single-strand break at the site of the removed base with both 3'- and 5'-phosphates. The polypeptide is Formamidopyrimidine-DNA glycosylase (Variovorax paradoxus (strain S110)).